Here is a 1820-residue protein sequence, read N- to C-terminus: uncharacterized protein (1820 aa).

9 disordered regions span residues 1 to 73, 86 to 158, 226 to 260, 286 to 366, 453 to 497, 519 to 548, 577 to 597, 619 to 689, and 735 to 830; these read MQWT…TLSG, TTTT…VRSA, GSSGPSSLVNSPALGRRKRYTSNSSNCSSQFNNNY, EERA…QETE, DVQD…RNLS, LSSISNKAPGGVPTESGVVTRPDSSDTDTA, GNSSTTTTTTSELGVPRPPTP, GAGT…TASG, and HSHN…TPSS. The segment covering 20–31 has biased composition (polar residues); that stretch reads NRNSIEQRTPAN. Residues 86 to 128 show a composition bias toward low complexity; that stretch reads TTTTTIIESSSSTNTTLEKNSPSPAGGSCSSGSGSLSPAYLQH. Over residues 129–146 the composition is skewed to basic residues; the sequence is HLQHHGSPLHHLQVHHHT. Positions 247-259 are enriched in low complexity; that stretch reads SNSSNCSSQFNNN. Residues 265 to 308 adopt a coiled-coil conformation; the sequence is VDSLDDMLRKLTELEQRVIEAEERAEEAEDKVRAMEQRLSEWPK. A compositionally biased stretch (basic and acidic residues) spans 294 to 305; that stretch reads DKVRAMEQRLSE. Low complexity predominate over residues 346 to 358; that stretch reads ASGGATAGAAGSG. Residues 362 to 438 adopt a coiled-coil conformation; that stretch reads TQETEKTITS…LKNHIANQSQ (77 aa). Polar residues predominate over residues 453-463; that stretch reads DVQDFTGSGSN. Residues S542 and S543 each carry the phosphoserine modification. Residues 623-632 are compositionally biased toward low complexity; it reads GTSTAESTAS. The segment covering 655–669 has biased composition (gly residues); that stretch reads HGSGTGIGTGDGHGT. Positions 738 to 769 are enriched in low complexity; the sequence is NSSSTDNTETSTSGSASSPSKSLKTSSSLSPA. Residues 787 to 818 are compositionally biased toward polar residues; that stretch reads QSRTSTTPSSRINQHLQPSQHQHHTLSNQNHG. 2 PH domains span residues 909–1003 and 1017–1124; these read SLEK…NVQR and KPTV…VVSG. A phosphoserine mark is found at S1073, S1075, and S1077. The MyTH4 domain occupies 1159–1378; sequence HTKDTITAPL…PSRMEVLSIL (220 aa). Residues 1389-1712 enclose the FERM domain; the sequence is HAIPVHMMNS…DYMNALGHTV (324 aa). Disordered regions lie at residues 1713-1748 and 1764-1820; these read PGTPQMNSLTRNGSHRSLRTSQRPNLGGGSAVATGF and ATHT…QRIK. Over residues 1714 to 1724 the composition is skewed to polar residues; that stretch reads GTPQMNSLTRN. Positions 1764–1781 are enriched in low complexity; that stretch reads ATHTLNSNHSHTLSSSHH. The span at 1805–1820 shows a compositional bias: basic and acidic residues; it reads HQPDILKSTPDHQRIK.

This is an uncharacterized protein from Drosophila melanogaster (Fruit fly).